Consider the following 143-residue polypeptide: 3-dehydroquinate dehydratase (143 aa).

The active-site Proton acceptor is the Tyr-22. 3 residues coordinate substrate: Asn-73, His-79, and Asp-86. Residue His-99 is the Proton donor of the active site. Substrate is bound by residues 100-101 (IS) and Arg-110.

It belongs to the type-II 3-dehydroquinase family. Homododecamer.

The enzyme catalyses 3-dehydroquinate = 3-dehydroshikimate + H2O. Its pathway is metabolic intermediate biosynthesis; chorismate biosynthesis; chorismate from D-erythrose 4-phosphate and phosphoenolpyruvate: step 3/7. In terms of biological role, catalyzes a trans-dehydration via an enolate intermediate. This chain is 3-dehydroquinate dehydratase, found in Mycobacterium avium (strain 104).